The chain runs to 485 residues: Cysteine--tRNA ligase (485 aa).

Zn(2+) is bound at residue Cys-27. A 'HIGH' region motif is present at residues 29-39 (ITAYDLCHIGH). Zn(2+) is bound by residues Cys-208, His-233, and Glu-237. Residues 265–269 (KMSKS) carry the 'KMSKS' region motif. ATP is bound at residue Lys-268.

It belongs to the class-I aminoacyl-tRNA synthetase family. In terms of assembly, monomer. It depends on Zn(2+) as a cofactor.

The protein localises to the cytoplasm. It carries out the reaction tRNA(Cys) + L-cysteine + ATP = L-cysteinyl-tRNA(Cys) + AMP + diphosphate. The chain is Cysteine--tRNA ligase from Maridesulfovibrio salexigens (strain ATCC 14822 / DSM 2638 / NCIMB 8403 / VKM B-1763) (Desulfovibrio salexigens).